The chain runs to 151 residues: MPRGSRSRTSRMAPPASRAPQMRAAPRPAPVAQPPAAAPPSAVGSSAAAPRQPGLMAQMATTAAGVAVGSAVGHTQGHAVTGGFSGGSNAEPARPDIAYQEPQGTQPAQQQQPCFYGIKQFLECAQNQGDIKLCEDFSKVLKQCRLAKGLA.

A mitochondrion-targeting transit peptide spans 1–9; that stretch reads MPRGSRSRT. Disordered regions lie at residues 1–50 and 75–110; these read MPRG…AAAP and TQGHAVTGGFSGGSNAEPARPDIAYQEPQGTQPAQQ. Low complexity predominate over residues 10 to 26; the sequence is SRMAPPASRAPQMRAAP. The span at 27-38 shows a compositional bias: pro residues; it reads RPAPVAQPPAAA. 2 stretches are compositionally biased toward low complexity: residues 39-50 and 100-110; these read PPSAVGSSAAAP and QEPQGTQPAQQ. Residues 111-151 form the CHCH domain; it reads QQPCFYGIKQFLECAQNQGDIKLCEDFSKVLKQCRLAKGLA. 2 short sequence motifs (cx9C motif) span residues 114-124 and 134-144; these read CFYGIKQFLEC and CEDFSKVLKQC. Disulfide bonds link Cys114-Cys144 and Cys124-Cys134.

The protein resides in the mitochondrion. The chain is Putative coiled-coil-helix-coiled-coil-helix domain-containing protein CHCHD2P9, mitochondrial (CHCHD2P9) from Homo sapiens (Human).